The sequence spans 622 residues: Probable potassium transport system protein Kup (622 aa).

The next 12 membrane-spanning stretches (helical) occupy residues 8-28 (LAAL…TSVL), 50-70 (ILSI…VVLV), 103-123 (LAVG…TPAI), 137-157 (PHFK…LFAV), 168-188 (FFGP…LAHI), 203-223 (ALGF…AVVL), 247-267 (WFGV…ALLL), 285-305 (ALIP…QALI), 337-357 (IYMP…VVMF), 366-386 (AYGI…FFVI), 393-413 (PLAL…AFFA), and 419-439 (LFQG…LMMT).

This sequence belongs to the HAK/KUP transporter (TC 2.A.72) family.

It is found in the cell inner membrane. The catalysed reaction is K(+)(in) + H(+)(in) = K(+)(out) + H(+)(out). Its function is as follows. Transport of potassium into the cell. Likely operates as a K(+):H(+) symporter. The polypeptide is Probable potassium transport system protein Kup (Verminephrobacter eiseniae (strain EF01-2)).